The primary structure comprises 156 residues: Small ribosomal subunit protein uS7 (156 aa).

Belongs to the universal ribosomal protein uS7 family. In terms of assembly, part of the 30S ribosomal subunit. Contacts proteins S9 and S11.

Its function is as follows. One of the primary rRNA binding proteins, it binds directly to 16S rRNA where it nucleates assembly of the head domain of the 30S subunit. Is located at the subunit interface close to the decoding center, probably blocks exit of the E-site tRNA. The sequence is that of Small ribosomal subunit protein uS7 from Pseudoalteromonas translucida (strain TAC 125).